The sequence spans 149 residues: Transcriptional repressor NrdR (149 aa).

A zinc finger lies at 3–34 (CPFCGNRDTNVRDSRSVNEGTFIKRRRFCGEC). Residues 49–139 (IKVIKKNGSC…VYMNFENEKD (91 aa)) enclose the ATP-cone domain.

It belongs to the NrdR family. Zn(2+) serves as cofactor.

Functionally, negatively regulates transcription of bacterial ribonucleotide reductase nrd genes and operons by binding to NrdR-boxes. This is Transcriptional repressor NrdR from Neorickettsia sennetsu (strain ATCC VR-367 / Miyayama) (Ehrlichia sennetsu).